Consider the following 163-residue polypeptide: MIEFSLLTKITLSFTILFLILSIISIIKGWKNRFQFIGVTSFSALLTISFFVFTFVPFTHKLIPGAEKYKVVFDDGANQIVIAVSSKLNQDQLVATLEQAASDLFSPGRLSRNNNSFIIKARALSDSIGTTNNSLYLGELDKILDSNTNDFETKIKIFNDSTL.

The protein belongs to the ycf51 family.

Its subcellular location is the plastid. The protein localises to the cyanelle. This is an uncharacterized protein from Cyanophora paradoxa.